Reading from the N-terminus, the 42-residue chain is Proline-rich antimicrobial peptide 2 (42 aa).

As to expression, hemolymph.

It localises to the secreted. In terms of biological role, antimicrobial protein. Has antibacterial activity against the Gram-positive bacterium M.luteus (MIC=8.6 uM). Lacks antibacterial activity against the Gram-positive bacteria B.circulans, L.monocytogenes, S.aureus, and S.lutea, and the Gram-negative bacteria E.coli D31, E.coli ATCC 25922, and S.typhimurium. Lacks antifungal activity against S.cerevisiae, P.pastoris, Z.marxianus, C.albicans, C.fructus, C.wickerhamii, A.niger, F.oxysporum, and T.harizianum. This is Proline-rich antimicrobial peptide 2 from Galleria mellonella (Greater wax moth).